We begin with the raw amino-acid sequence, 206 residues long: Protein GrpE (206 aa).

Basic and acidic residues predominate over residues 1–10; that stretch reads MTDPDLHQND. Residues 1–38 are disordered; sequence MTDPDLHQNDPENPAQASEPVVSKPYIMPDDPETGSAE.

This sequence belongs to the GrpE family. In terms of assembly, homodimer.

Its subcellular location is the cytoplasm. Its function is as follows. Participates actively in the response to hyperosmotic and heat shock by preventing the aggregation of stress-denatured proteins, in association with DnaK and GrpE. It is the nucleotide exchange factor for DnaK and may function as a thermosensor. Unfolded proteins bind initially to DnaJ; upon interaction with the DnaJ-bound protein, DnaK hydrolyzes its bound ATP, resulting in the formation of a stable complex. GrpE releases ADP from DnaK; ATP binding to DnaK triggers the release of the substrate protein, thus completing the reaction cycle. Several rounds of ATP-dependent interactions between DnaJ, DnaK and GrpE are required for fully efficient folding. The polypeptide is Protein GrpE (Bradyrhizobium sp. (strain ORS 278)).